Here is a 663-residue protein sequence, read N- to C-terminus: DNA ligase (663 aa).

NAD(+) is bound by residues 31-35, 80-81, and Glu-109; these read DSEYD and SL. The active-site N6-AMP-lysine intermediate is Lys-111. Positions 132, 166, 282, and 306 each coordinate NAD(+). Residues Cys-400, Cys-403, Cys-418, and Cys-423 each coordinate Zn(2+). The BRCT domain maps to 585 to 663; that stretch reads ELHPVFGEKT…EQMMVDALRN (79 aa).

Belongs to the NAD-dependent DNA ligase family. LigA subfamily. The cofactor is Mg(2+). Mn(2+) serves as cofactor.

It carries out the reaction NAD(+) + (deoxyribonucleotide)n-3'-hydroxyl + 5'-phospho-(deoxyribonucleotide)m = (deoxyribonucleotide)n+m + AMP + beta-nicotinamide D-nucleotide.. DNA ligase that catalyzes the formation of phosphodiester linkages between 5'-phosphoryl and 3'-hydroxyl groups in double-stranded DNA using NAD as a coenzyme and as the energy source for the reaction. It is essential for DNA replication and repair of damaged DNA. This Macrococcus caseolyticus (strain JCSC5402) (Macrococcoides caseolyticum) protein is DNA ligase.